The chain runs to 434 residues: Alpha-enolase (434 aa).

A Mg(2+)-binding site is contributed by serine 40. Residues histidine 158 and glutamate 167 each contribute to the substrate site. Glutamate 210 functions as the Proton donor in the catalytic mechanism. Residues aspartate 245, glutamate 293, and aspartate 318 each contribute to the Mg(2+) site. The substrate site is built by glutamate 293 and aspartate 318. Catalysis depends on lysine 343, which acts as the Proton acceptor. Residues 370-373 (SHRS) and lysine 394 contribute to the substrate site.

The protein belongs to the enolase family. As to quaternary structure, homodimer. Requires Mg(2+) as cofactor.

Its subcellular location is the cytoplasm. The catalysed reaction is (2R)-2-phosphoglycerate = phosphoenolpyruvate + H2O. It participates in carbohydrate degradation; glycolysis; pyruvate from D-glyceraldehyde 3-phosphate: step 4/5. In Gallus gallus (Chicken), this protein is Alpha-enolase (ENO1).